We begin with the raw amino-acid sequence, 404 residues long: MHC class I-like protein MILL1 (404 aa).

The signal sequence occupies residues 1-30 (MMLSRDLRAEAAVRLWIMFLLLEDLLGACA). Residues 59-150 (EVAGPHTLRY…VTGQKGQDKG (92 aa)) form an alpha-1 region. Asparagine 98, asparagine 102, and asparagine 165 each carry an N-linked (GlcNAc...) asparagine glycan. Residues 151–242 (LHILQATLGC…SLRSEPLDTG (92 aa)) are alpha-2. Cystine bridges form between cysteine 160/cysteine 223 and cysteine 262/cysteine 322. Residues 224–338 (PAQLQRHLAS…GNIEKRAVIV (115 aa)) enclose the Ig-like C1-type domain. The segment at 243 to 342 (SPMVIVTFRN…KRAVIVNTVS (100 aa)) is alpha-3. Asparagine 323 is a glycosylation site (N-linked (GlcNAc...) asparagine). Positions 343-373 (GEKTRQPSTSGVGGRVKKSLWTTMTTAFMVT) are connecting peptide. Serine 374 carries the GPI-anchor amidated serine lipid modification. A propeptide spans 375–404 (WTRKTGGDSTLLLLWWLLFFSTVLAVLTLV) (removed in mature form).

It belongs to the MHC class I family. In terms of assembly, heterodimer with B2M. Detected in skin, esophagus, tongue, skin, muscle, uterus, ovary, testis and epididymis.

Its subcellular location is the cell membrane. The chain is MHC class I-like protein MILL1 from Rattus norvegicus (Rat).